The sequence spans 208 residues: Redox-sensing transcriptional repressor Rex (208 aa).

Residues 18-57 (IYYRYFKLLETDGIERIKSEQLAKLVAIPSATIRRDFSYI) constitute a DNA-binding region (H-T-H motif). Position 92–97 (92–97 (GVGNLG)) interacts with NAD(+).

Belongs to the transcriptional regulatory Rex family. As to quaternary structure, homodimer.

Its subcellular location is the cytoplasm. In terms of biological role, modulates transcription in response to changes in cellular NADH/NAD(+) redox state. This Latilactobacillus sakei subsp. sakei (strain 23K) (Lactobacillus sakei subsp. sakei) protein is Redox-sensing transcriptional repressor Rex.